Here is a 62-residue protein sequence, read N- to C-terminus: MKPAIFLMLFVAMFLISEGEGFKPKDAPQERSVFSPVVQSCPRCHRRDHFGKCRKLDPCPDK.

A signal peptide spans 1–21 (MKPAIFLMLFVAMFLISEGEG). A propeptide spanning residues 22-31 (FKPKDAPQER) is cleaved from the precursor. Residue Pro-36 is modified to Hydroxyproline. Disulfide bonds link Cys-41–Cys-53 and Cys-44–Cys-59.

It belongs to the Hau1a/HC18/HC19 family.

It localises to the secreted. The protein localises to the nematocyst. Toxin that is lethal to crab. Does not produce the typical symptoms associated with sodium channel toxins in crabs, suggesting that it likely does not act on sodium channels. The polypeptide is U-stichotoxin-Hau1a (Heteractis aurora (Banded sea anemone)).